The primary structure comprises 311 residues: p-hydroxybenzoic acid efflux pump subunit AaeA (311 aa).

Residues 11 to 31 traverse the membrane as a helical segment; it reads IGITLLVVLLAVIAIFKVWAF.

It belongs to the membrane fusion protein (MFP) (TC 8.A.1) family.

Its subcellular location is the cell inner membrane. Functionally, forms an efflux pump with AaeB. This chain is p-hydroxybenzoic acid efflux pump subunit AaeA, found in Yersinia enterocolitica serotype O:8 / biotype 1B (strain NCTC 13174 / 8081).